The chain runs to 378 residues: Putative glutamate--cysteine ligase 2 (378 aa).

This sequence belongs to the glutamate--cysteine ligase type 2 family. YbdK subfamily.

It carries out the reaction L-cysteine + L-glutamate + ATP = gamma-L-glutamyl-L-cysteine + ADP + phosphate + H(+). In terms of biological role, ATP-dependent carboxylate-amine ligase which exhibits weak glutamate--cysteine ligase activity. This is Putative glutamate--cysteine ligase 2 from Bdellovibrio bacteriovorus (strain ATCC 15356 / DSM 50701 / NCIMB 9529 / HD100).